Reading from the N-terminus, the 278-residue chain is Tryptophan synthase alpha chain (278 aa).

Residues Glu50 and Asp61 each act as proton acceptor in the active site.

The protein belongs to the TrpA family. As to quaternary structure, tetramer of two alpha and two beta chains.

The catalysed reaction is (1S,2R)-1-C-(indol-3-yl)glycerol 3-phosphate + L-serine = D-glyceraldehyde 3-phosphate + L-tryptophan + H2O. It participates in amino-acid biosynthesis; L-tryptophan biosynthesis; L-tryptophan from chorismate: step 5/5. Functionally, the alpha subunit is responsible for the aldol cleavage of indoleglycerol phosphate to indole and glyceraldehyde 3-phosphate. The chain is Tryptophan synthase alpha chain from Rhodopseudomonas palustris (strain ATCC BAA-98 / CGA009).